The following is a 502-amino-acid chain: Glycerol kinase (502 aa).

Threonine 12 lines the ADP pocket. ATP-binding residues include threonine 12, threonine 13, and serine 14. Position 12 (threonine 12) interacts with sn-glycerol 3-phosphate. Arginine 16 provides a ligand contact to ADP. Residues arginine 82, glutamate 83, tyrosine 134, and aspartate 243 each coordinate sn-glycerol 3-phosphate. The glycerol site is built by arginine 82, glutamate 83, tyrosine 134, aspartate 243, and glutamine 244. Positions 265 and 308 each coordinate ADP. ATP is bound by residues threonine 265, glycine 308, glutamine 312, and glycine 412. Glycine 412 contributes to the ADP binding site.

It belongs to the FGGY kinase family.

It carries out the reaction glycerol + ATP = sn-glycerol 3-phosphate + ADP + H(+). Its pathway is polyol metabolism; glycerol degradation via glycerol kinase pathway; sn-glycerol 3-phosphate from glycerol: step 1/1. Its activity is regulated as follows. Inhibited by fructose 1,6-bisphosphate (FBP). Functionally, key enzyme in the regulation of glycerol uptake and metabolism. Catalyzes the phosphorylation of glycerol to yield sn-glycerol 3-phosphate. This chain is Glycerol kinase, found in Methylobacterium nodulans (strain LMG 21967 / CNCM I-2342 / ORS 2060).